Here is a 236-residue protein sequence, read N- to C-terminus: Methylosome subunit pICln (236 aa).

Position 2 is an N-acetylserine (Ser-2). Ser-95, Ser-143, Ser-192, Ser-194, Ser-197, and Ser-209 each carry phosphoserine. Positions 134-158 are disordered; it reads LHPDPEDEDSDDYDGEEYDVEAHEQ. Acidic residues predominate over residues 138–152; sequence PEDEDSDDYDGEEYD. Position 222 is a phosphothreonine (Thr-222).

This sequence belongs to the pICln (TC 1.A.47) family. As to quaternary structure, component of the methylosome, a 20S complex containing at least PRMT5/SKB1, WDR77/MEP50 and CLNS1A/pICln. May mediate SNRPD1 and SNRPD3 methylation. Forms a 6S pICln-Sm complex composed of CLNS1A/pICln, SNRPD1, SNRPD2, SNRPE, SNRPF and SNRPG; ring-like structure where CLNS1A/pICln mimics additional Sm proteins and which is unable to assemble into the core snRNP. Interacts with LSM10 and LSM11. As to expression, expressed in most tissues.

The protein localises to the cytoplasm. Its subcellular location is the cytosol. It is found in the nucleus. It localises to the cytoskeleton. Functionally, involved in both the assembly of spliceosomal snRNPs and the methylation of Sm proteins. Chaperone that regulates the assembly of spliceosomal U1, U2, U4 and U5 small nuclear ribonucleoproteins (snRNPs), the building blocks of the spliceosome, and thereby plays an important role in the splicing of cellular pre-mRNAs. Most spliceosomal snRNPs contain a common set of Sm proteins SNRPB, SNRPD1, SNRPD2, SNRPD3, SNRPE, SNRPF and SNRPG that assemble in a heptameric protein ring on the Sm site of the small nuclear RNA to form the core snRNP (Sm core). In the cytosol, the Sm proteins SNRPD1, SNRPD2, SNRPE, SNRPF and SNRPG are trapped in an inactive 6S pICln-Sm complex by the chaperone CLNS1A that controls the assembly of the core snRNP. Dissociation by the SMN complex of CLNS1A from the trapped Sm proteins and their transfer to an SMN-Sm complex triggers the assembly of core snRNPs and their transport to the nucleus. In Rattus norvegicus (Rat), this protein is Methylosome subunit pICln (Clns1a).